The sequence spans 266 residues: Cyclin-C (266 aa).

Residues 47–151 enclose the Cyclin N-terminal domain; it reads IIQVLGEQLK…LLENLDCCLI (105 aa).

This sequence belongs to the cyclin family. Cyclin C subfamily. As to quaternary structure, component of the Cdk8 module of the Mediator complex.

Its subcellular location is the nucleus. Its function is as follows. Component of the Mediator complex, a coactivator involved in regulated gene transcription of nearly all RNA polymerase II-dependent genes. Mediator functions as a bridge to convey information from gene-specific regulatory proteins to the basal RNA polymerase II transcription machinery. Mediator is recruited to promoters by direct interactions with regulatory proteins and serves as a scaffold for the assembly of a functional preinitiation complex with RNA polymerase II and the general transcription factors. Binds to and activates cyclin-dependent kinase Cdk8 that phosphorylates the CTD (C-terminal domain) of the large subunit of RNA polymerase II (RNAp II), which may inhibit the formation of a transcription initiation complex. This is Cyclin-C (CycC) from Anopheles gambiae (African malaria mosquito).